Consider the following 191-residue polypeptide: Transmembrane protein 17B (191 aa).

4 consecutive transmembrane segments (helical) span residues 50 to 70 (MSLYFNMWFFPFWWISEVVML), 83 to 103 (FILITILIVMTLIEAIRLYLG), 115 to 135 (LAGFWLLTFLLQFPLILFQLF), and 147 to 167 (GVHIILALFIFAEVLFGFVAL).

This sequence belongs to the TMEM17 family. As to quaternary structure, part of the tectonic-like complex (also named B9 complex).

It localises to the cell projection. The protein resides in the cilium membrane. In terms of biological role, transmembrane component of the tectonic-like complex, a complex localized at the transition zone of primary cilia and acting as a barrier that prevents diffusion of transmembrane proteins between the cilia and plasma membranes. Required for ciliogenesis and sonic hedgehog/SHH signaling. The protein is Transmembrane protein 17B (Tmem17b) of Danio rerio (Zebrafish).